The following is a 563-amino-acid chain: Arginine--tRNA ligase (563 aa).

Residues 120–130 (PNIAKPFHVGH) carry the 'HIGH' region motif.

The protein belongs to the class-I aminoacyl-tRNA synthetase family. Monomer.

Its subcellular location is the cytoplasm. It catalyses the reaction tRNA(Arg) + L-arginine + ATP = L-arginyl-tRNA(Arg) + AMP + diphosphate. The chain is Arginine--tRNA ligase from Clostridium botulinum (strain Alaska E43 / Type E3).